A 306-amino-acid chain; its full sequence is MERLQRLMMNSKVGSADTGRDDTKETVYISSIALLKMLKHGRAGVPMEVMGLMLGEFVDDYTVNVVDVFAMPQSGTGVSVEAVDDVFQAKMMDMLKQTGRDQMVVGWYHSHPGFGCWLSSVDVNTQKSFEQLNSRAVAVVVDPIQSVKGKVVIDAFRLIDTGALINNLEPRQTTSNTGLLNKANIQALIHGLNRHYYSLNIDYHKTAKETKMLMNLHKEQWQSGLKMYDYEEKEESNLAATKSMVKIAEQYSKRIEEEKELTEEELKTRYVGRQDPKKHLSETADETLENNIVSVLTAGVNSVAIK.

Methionine 1 is modified (N-acetylmethionine). A disordered region spans residues 1–20; that stretch reads MERLQRLMMNSKVGSADTGR. The MPN domain occupies 27 to 162; that stretch reads VYISSIALLK…IDAFRLIDTG (136 aa). Zn(2+) is bound by residues histidine 109, histidine 111, and aspartate 122. A JAMM motif motif is present at residues 109 to 122; the sequence is HSHPGFGCWLSSVD.

It belongs to the peptidase M67A family. As to quaternary structure, component of the lid subcomplex of the 19S proteasome regulatory particle complex (also named PA700 complex). The 26S proteasome consists of a 20S proteasome core and two 19S regulatory subunits. Interacts directly with RPN8 and STS1. In terms of processing, N-acetylated by NAT3.

The catalysed reaction is Thiol-dependent hydrolysis of ester, thioester, amide, peptide and isopeptide bonds formed by the C-terminal Gly of ubiquitin (a 76-residue protein attached to proteins as an intracellular targeting signal).. Its function is as follows. Component of the lid subcomplex of the 26S proteasome, a multiprotein complex involved in the ATP-dependent degradation of ubiquitinated proteins. RPN11 is the only catalytically active member of the lid and serves as the essential deubiquitinase of the proteasome. The chain is Ubiquitin carboxyl-terminal hydrolase RPN11 (RPN11) from Saccharomyces cerevisiae (strain ATCC 204508 / S288c) (Baker's yeast).